A 188-amino-acid polypeptide reads, in one-letter code: Small ribosomal subunit protein uS7 (188 aa).

Belongs to the universal ribosomal protein uS7 family. Part of the 30S ribosomal subunit.

One of the primary rRNA binding proteins, it binds directly to 16S rRNA where it nucleates assembly of the head domain of the 30S subunit. Is located at the subunit interface close to the decoding center. In Methanococcus maripaludis (strain DSM 14266 / JCM 13030 / NBRC 101832 / S2 / LL), this protein is Small ribosomal subunit protein uS7.